The following is a 287-amino-acid chain: 4-hydroxybenzoate octaprenyltransferase (287 aa).

The next 9 helical transmembrane spans lie at 20–40 (IGSLLLLWPTLWALFLAADGL), 43–63 (MHVLVVFVLGVVFMRAAGCVI), 94–114 (LGLFGLLVLVSFVLVLTMNTL), 115–135 (TIMLSVVGLVLAAAYPFMKRY), 137–157 (HLPQLVLGMAFGWSIPMAYAA), 159–179 (AGELPVVAWLLFTANILWTIA), 210–230 (IIIGVLQLSTLVTMILIGHSL), 235–255 (IYYWFLLMASGLFVYQQRLIG), and 266–286 (FLNNNYVGMLIFLGIAISVMM).

This sequence belongs to the UbiA prenyltransferase family. It depends on Mg(2+) as a cofactor.

Its subcellular location is the cell inner membrane. The enzyme catalyses all-trans-octaprenyl diphosphate + 4-hydroxybenzoate = 4-hydroxy-3-(all-trans-octaprenyl)benzoate + diphosphate. It participates in cofactor biosynthesis; ubiquinone biosynthesis. Functionally, catalyzes the prenylation of para-hydroxybenzoate (PHB) with an all-trans polyprenyl group. Mediates the second step in the final reaction sequence of ubiquinone-8 (UQ-8) biosynthesis, which is the condensation of the polyisoprenoid side chain with PHB, generating the first membrane-bound Q intermediate 3-octaprenyl-4-hydroxybenzoate. The polypeptide is 4-hydroxybenzoate octaprenyltransferase (Photobacterium profundum (strain SS9)).